A 267-amino-acid chain; its full sequence is Interleukin-1 beta (267 aa).

Positions 1–115 (MAPVPELTSE…DTWDDGFVCD (115 aa)) are excised as a propeptide.

The protein belongs to the IL-1 family. As to quaternary structure, monomer. In its precursor form, weakly interacts with full-length MEFV; the mature cytokine does not interact at all. Interacts with integrins ITGAV:ITGBV and ITGA5:ITGB1; integrin-binding is required for IL1B signaling. Interacts with cargo receptor TMED10; the interaction is direct and is required for the secretion of IL1B mature form. Interacts with HSP90AB1; the interaction facilitates cargo translocation into the ERGIC. Interacts with HSP90B1; the interaction facilitates cargo translocation into the ERGIC.

Its subcellular location is the cytoplasm. The protein localises to the cytosol. It localises to the secreted. It is found in the lysosome. The protein resides in the extracellular exosome. Functionally, potent pro-inflammatory cytokine. Initially discovered as the major endogenous pyrogen, induces prostaglandin synthesis, neutrophil influx and activation, T-cell activation and cytokine production, B-cell activation and antibody production, and fibroblast proliferation and collagen production. Promotes Th17 differentiation of T-cells. Synergizes with IL12/interleukin-12 to induce IFNG synthesis from T-helper 1 (Th1) cells. Plays a role in angiogenesis by inducing VEGF production synergistically with TNF and IL6. Involved in transduction of inflammation downstream of pyroptosis: its mature form is specifically released in the extracellular milieu by passing through the gasdermin-D (GSDMD) pore. This chain is Interleukin-1 beta (IL1B), found in Felis catus (Cat).